A 189-amino-acid polypeptide reads, in one-letter code: Transcription factor FapR (189 aa).

This sequence belongs to the FapR family.

Its function is as follows. Transcriptional factor involved in regulation of membrane lipid biosynthesis by repressing genes involved in fatty acid and phospholipid metabolism. This chain is Transcription factor FapR, found in Listeria innocua serovar 6a (strain ATCC BAA-680 / CLIP 11262).